The sequence spans 504 residues: Crh-like protein CRH12 (504 aa).

Residues 1–18 (MYKQILTFLILFLRYILS) form the signal peptide. Positions 19–270 (EFPDDPYEDD…YSKALTYSYG (252 aa)) constitute a GH16 domain. Asn-34 is a glycosylation site (N-linked (GlcNAc...) asparagine). Cys-43 and Cys-51 are joined by a disulfide. Glu-138 serves as the catalytic Nucleophile. The Proton donor role is filled by Glu-143. Residue Glu-143 coordinates chitin. A glycan (N-linked (GlcNAc...) asparagine) is linked at Asn-161. Positions 221, 225, and 234 each coordinate chitin. Residues 304 to 404 (KPTPKQETDD…LDISTQLPPL (101 aa)) form a disordered region. A compositionally biased stretch (polar residues) spans 316–329 (VLTSSKSQRVATTI). Positions 356-378 (WETEQDETGTDDTENSDNEEEES) are enriched in acidic residues. N-linked (GlcNAc...) asparagine glycans are attached at residues Asn-407, Asn-416, and Asn-425. Residue Gly-479 is the site of GPI-anchor amidated glycine attachment. The propeptide at 480 to 504 (VSSILATSFSSVVIAEILVIVVLLL) is removed in mature form.

The protein belongs to the glycosyl hydrolase 16 family. CRH1 subfamily. Post-translationally, the GPI-anchor is attached to the protein in the endoplasmic reticulum and serves to target the protein to the cell surface. There, the glucosamine-inositol phospholipid moiety is cleaved off and the GPI-modified mannoprotein is covalently attached via its lipidless GPI glycan remnant to the 1,6-beta-glucan of the outer cell wall layer.

The protein resides in the secreted. The protein localises to the cell wall. It is found in the membrane. The catalysed reaction is Random endo-hydrolysis of N-acetyl-beta-D-glucosaminide (1-&gt;4)-beta-linkages in chitin and chitodextrins.. Dual chitinase/transglycosylase that plays a role in cell wall architecture. Chitinase and transglycosylase activities are coupled. Required for the polysaccharide cross-linking at the septa and the cell wall. More specifically, transfers chitin to 1,6-beta-glucan in the cell wall. Plays an important role in fungal pathogenesis via its functions in cell wall assembly and regeneration, filamentation, and adherence to host cells. This is Crh-like protein CRH12 (CRH12) from Candida albicans (strain SC5314 / ATCC MYA-2876) (Yeast).